The sequence spans 239 residues: Transcriptional regulatory protein BtsR (239 aa).

Residues 3-116 form the Response regulatory domain; it reads KVLIVDDEPL…RLEKTLHRLR (114 aa). D54 bears the 4-aspartylphosphate mark. In terms of domain architecture, HTH LytTR-type spans 137–239; that stretch reads IPCTGHSRIY…LKSLKEAIGL (103 aa).

Phosphorylated by BtsS.

In terms of biological role, member of the two-component regulatory system BtsS/BtsR. BtsR regulates expression of btsT by binding to its promoter region. The polypeptide is Transcriptional regulatory protein BtsR (Salmonella typhi).